The following is a 449-amino-acid chain: Cytochrome P450 monooxygenase iliC (449 aa).

The chain crosses the membrane as a helical span at residues 28-44 (TFAITFMGVKQICTIEG). A heme-binding site is contributed by Cys-397.

The protein belongs to the cytochrome P450 family. It depends on heme as a cofactor.

Its subcellular location is the membrane. The enzyme catalyses (3E,5S)-3-[(2E,4E,8S,10E,12Z)-1-hydroxy-4,8-dimethyltetradeca-2,4,10,12-tetraen-1-ylidene]-5-[(4-hydroxyphenyl)methyl]pyrrolidine-2,4-dione + reduced [NADPH--hemoprotein reductase] + O2 = 3-[(2E,4E,8S,10E,12Z)-4,8-dimethyltetradeca-2,4,10,12-tetraenoyl]-4-hydroxy-5-(4-hydroxyphenyl)-1,2-dihydropyridin-2-one + oxidized [NADPH--hemoprotein reductase] + 2 H2O. It participates in mycotoxin biosynthesis. Its function is as follows. Cytochrome P450 monooxygenase; part of the gene cluster that mediates the biosynthesis of ilicicolin H, a 4-hydroxy-2-pyridonealkaloid that has potent and broad antifungal activities by inhibiting the mitochondrial respiration chain. IliC catalyzes the ring expansion of the tetramate intermediate to the acyclic 2-pyridone intermediate that contains the trans bis-diene chain. The biosynthesis of ilicicolin H starts with formation of the tetramic acid by the hybrid PKS-NRPS synthetase iliA with the partnering trans-enoyl reductase iliB since iliA lacks a designated enoylreductase (ER) domain. The cytochrome P450 monooxygenase iliC then catalyzes the ring expansion of the tetramate to the acyclic 2-pyridone. The pericyclase iliD further converts the acyclic 2-pyridone into 8-epi-ilicicolin H. 8-epi-ilicicolin H might then spontaneously convert to ilicicolin H since ilicicolin H is produced in the absence of the epimerase iliE, in contrast to what was observed for the Talaromyces variabilis ilicolin H biosynthetic pathway. The protein is Cytochrome P450 monooxygenase iliC of Hypocrea jecorina (strain QM6a) (Trichoderma reesei).